The sequence spans 264 residues: MATRTADKLEKKLVVVVGGTSGLGFAVAQAAVDRKANVVVASSKQASVDDALSRLQAGLASDDDVARVRGLTLDLAAANVEEQIVALYDFASKNGQQKIDHIAVTAGDSLYPKALDQVKAEDFINASQVRVIGALLLAKHAAKYLAKSAASSFTLTSGVRDVRPAANFAPVAPVSAAVKSLAKTLAHDLAPIRVNSISPGAVRTEFFTKIAGEHADAVLQGLAEQTLTKSNGVAEDIAEIYLVVMTSAYIDGADLVADGGSLIA.

Residues 13 to 32 (LVVVVGGTSGLGFAVAQAAV) form a helical membrane-spanning segment. NADP(+) is bound by residues Leu23, Ser43, and Asp74. An N-linked (GlcNAc...) asparagine glycan is attached at Asn125. 2 residues coordinate NADP(+): Arg130 and Lys139. Ser157 serves as the catalytic Proton donor. The NADP(+) site is built by Val202 and Thr204.

The protein belongs to the short-chain dehydrogenases/reductases (SDR) family. The cofactor is NADP(+).

Its subcellular location is the membrane. The protein operates within mycotoxin biosynthesis. Functionally, short-chain dehydrogenase/reductase; part of the gene cluster that mediates the biosynthesis of UCS1025A, a member of the pyrrolizidinone family that acts as a strong telomerase inhibitor and displays potent antibacterial and antitumor properties. These compounds share a hemiaminal-containing pyrrolizidinone core fused with a gamma-lactone, giving a furopyrrolizidine that is connected to a decalin fragment. The polyketide synthase module (PKS) of the PKS-NRPS ucsA is responsible for the synthesis of the polyketide backbone via the condensation of an acetyl-CoA starter unit with 6 malonyl-CoA units. The downstream nonribosomal peptide synthetase (NRPS) module then amidates the carboxyl end of the polyketide with a 2S,3S-methylproline derived from L-isoleucine by the 2-oxoglutarate-dependent dioxygenase ucsF which converts L-isoleucine to (4S,5S)-4-methylpyrroline-5-carboxylate that is further converted to 2S,3S-methylproline by the pyrroline-5-carboxylate reductase ucsG. Reductive release of the completed aminoacyl polyketide from the assembly line can form the 3-pyrrolin-2-one structure via an intramolecular Knoevenagel reaction. Because ucsA lacks a designated enoylreductase (ER) domain, the required activity is provided the enoyl reductase ucsL. This keto acyclic precursor is the substrate of the Diels-Alderase ucsH, that catalyzes the Diels-Alder cycloaddition. Oxidation of the 3S-methyl group to a carboxylate by the cytochrome P450 monooxygenase ucsK allows an oxa-Michael cyclization that might involve the reductase/dehydrogenase ucsI and which furnishes the furopyrrolizidine. The oxidase ucsJ likely plays a critical role in stereoselective reduction of the C5-C6 double bond to afford the required R-configured carboxylate group. Further enolization and oxidation at C5 by an unidentified enzyme affords the last intermediate that can undergo oxa-Michael cyclization to yield UCS1025A. The chain is Short-chain dehydrogenase/reductase ucsE from Acremonium sp.